Here is a 338-residue protein sequence, read N- to C-terminus: Nicotinate-nucleotide--dimethylbenzimidazole phosphoribosyltransferase (338 aa).

Glu305 (proton acceptor) is an active-site residue.

The protein belongs to the CobT family.

It carries out the reaction 5,6-dimethylbenzimidazole + nicotinate beta-D-ribonucleotide = alpha-ribazole 5'-phosphate + nicotinate + H(+). It functions in the pathway nucleoside biosynthesis; alpha-ribazole biosynthesis; alpha-ribazole from 5,6-dimethylbenzimidazole: step 1/2. Functionally, catalyzes the synthesis of alpha-ribazole-5'-phosphate from nicotinate mononucleotide (NAMN) and 5,6-dimethylbenzimidazole (DMB). In Sinorhizobium medicae (strain WSM419) (Ensifer medicae), this protein is Nicotinate-nucleotide--dimethylbenzimidazole phosphoribosyltransferase.